Here is a 498-residue protein sequence, read N- to C-terminus: Osteoclast stimulatory transmembrane protein (498 aa).

Residues 1 to 51 lie on the Cytoplasmic side of the membrane; it reads MRTIRAATEHLFGLGWKFWRLGICKAVVPLQAAWKAFSQPVPASCNELLTQ. Residues 52–72 form a helical membrane-spanning segment; it reads LLLCVSLASLIAGLAHHWLVS. The Extracellular segment spans residues 73–81; it reads LQLYPLGPP. Residues 82–102 traverse the membrane as a helical segment; sequence ALVTSLCGLFVFLSLGLVPPI. The Cytoplasmic segment spans residues 103 to 121; sequence RCLFVLSVPTLGSKQGRRL. A helical membrane pass occupies residues 122–142; that stretch reads LLSYSAANLAVAVVPNVLGNV. Residues 143 to 226 are Extracellular-facing; that stretch reads RAAGQVLSCV…LARAALGTQR (84 aa). Residues 227–247 form a helical membrane-spanning segment; that stretch reads VVTGLFLLGLLGESAWYLHRY. Topologically, residues 248 to 303 are cytoplasmic; that stretch reads LTDLRFDNIYATRQLVRQLAQAGATHLLTSPPPWLLQTAQPKLSREELLSCLLRLG. A helical transmembrane segment spans residues 304-324; it reads LLALLLVATAVTVASDYGAFL. The Extracellular portion of the chain corresponds to 325–401; it reads LAQAAVAWAQ…QAQPPRVTAA (77 aa). Residues 402–422 form a helical membrane-spanning segment; it reads LAAGALQLLAGATLVLQAYAW. The Cytoplasmic portion of the chain corresponds to 423 to 498; sequence RLRHTIAASF…DSLGPPYDLE (76 aa). The disordered stretch occupies residues 449–498; sequence QRRHNQSDHLNKQPGTMATRESRKPGQGTRTLESQGPQAHDSLGPPYDLE. Polar residues predominate over residues 476–485; the sequence is GTRTLESQGP.

In terms of tissue distribution, expressed in osteoclast (at protein level). Ubiquitous. Highly expressed in multi-nuclear osteoclast cells compared to mono-nuclear macrophages. Expressed in foreign body giant cells (FBGCs).

It is found in the membrane. Functionally, probable cell surface receptor that plays a role in cellular fusion and cell differentiation. Cooperates with DCSTAMP in modulating cell-cell fusion in both osteoclasts and foreign body giant cells (FBGCs). Involved in osteoclast bone resorption. Promotes osteoclast differentiation and may play a role in the multinucleated osteoclast maturation. This Mus musculus (Mouse) protein is Osteoclast stimulatory transmembrane protein (Ocstamp).